Reading from the N-terminus, the 754-residue chain is Exocyst complex component EXO84A (754 aa).

Disordered stretches follow at residues 514–540 (RILP…EQRE) and 734–754 (GHGE…YTSN). Residues 518–527 (QGTSQSTPRR) are compositionally biased toward polar residues. The segment covering 528 to 540 (GSSDRQNRPEQRE) has biased composition (basic and acidic residues). Positions 741–754 (TSPSVSSAKSYTSN) are enriched in polar residues.

The protein belongs to the EXO84 family. The exocyst complex is composed of SEC3, SEC5, SEC6, SEC8, SEC10, EXO70A1 and EXO84.

Component of the exocyst complex involved in the docking of exocytic vesicles with fusion sites on the plasma membrane during regulated or polarized secretion. Involved in polarized cell growth and organ morphogenesis. During cytokinesis, involved in cell plate initiation, cell plate maturation and formation of new primary cell wall. This is Exocyst complex component EXO84A (EXO84A) from Arabidopsis thaliana (Mouse-ear cress).